The primary structure comprises 347 residues: Dehydratase asqC (347 aa).

The N-terminal stretch at 1–18 (MRPAILAAFSTLPAAAKA) is a signal peptide. N-linked (GlcNAc...) asparagine glycosylation is found at Asn-51, Asn-103, Asn-131, Asn-143, Asn-215, Asn-264, and Asn-281.

The enzyme catalyses [(1'E)-5'-(3',3'-dimethyloxiran-2'-yl)-3'-hydroxy-3'-methylpent-1'-en-1'-yl]-quinolinone B = (1'E,3'E)-5-(3,3-dimethyloxiran-2-yl)-3-methylhexa-1,3-dienyl-quinolinone B + H2O. Its pathway is secondary metabolite biosynthesis. The protein operates within alkaloid biosynthesis. It participates in mycotoxin biosynthesis. In terms of biological role, dehydratase; part of the gene cluster that mediates the biosynthesis of the aspoquinolone mycotoxins. Within the pathway, the dehydratase asqC catalyzes the dehydratation of the epoxide at C-3 to produce (1'E,3'E)-5-(3,3-dimethyloxiran-2-yl)-3-methylhexa-1,3-dienyl-quinolinone B. The first step of the pathway is catalyzed by the nonribosomal peptide synthetase asqK that condenses anthranilic acid and O-methyl-L-tyrosine to produce 4'-methoxycyclopeptin. 4'-methoxycyclopeptin is then converted to 4'-methoxydehydrocyclopeptin by the ketoglutarate-dependent dioxygenase asqJ. AsqJ also converts its first product 4'-methoxydehydrocyclopeptin to 4'-methoxycyclopenin. The following conversion of 4'-methoxycyclopenin into 4'-methoxyviridicatin is catalyzed by the cyclopenase asqI. 4'-methoxyviridicatin is the precursor of quinolone natural products, and is further converted to quinolinone B. The prenyltransferase asqH1 then catalyzes the canonical Friedel-Crafts alkylation of quinolinone B with dimethylallyl cation to yield dimethylallyl quinolone, which is subjected to FAD-dependent dehydrogenation by the FAD-linked oxidoreductase asqF to yield conjugated aryl diene. The delta(3') double bond then serves as the site of the second alkylation with DMAPP catalyzed by the prenyltransferase asqH2 to yield a carbenium ion intermediate, which can be attacked by H(2)O to yield a styrenyl quinolone containing a C3'-hydroxyprenyl chain. The FAD-dependent monooxygenase asqG performs epoxidation of the terminal C7'-C8' olefin. Finally, after dehydratation of the epoxide at C3 by asqC, the quinolone epoxide rearrangement protein asqO catalyzes an enzymatic 3-exo-tet cyclization to yield the cyclopropyl-THF ring system in aspoquinolone. The protein is Dehydratase asqC of Emericella nidulans (strain FGSC A4 / ATCC 38163 / CBS 112.46 / NRRL 194 / M139) (Aspergillus nidulans).